The sequence spans 291 residues: Taste receptor type 2 member 16 (291 aa).

Residue Met-1 is a topological domain, extracellular. Residues 2-22 (IPIQLTVFFMIIYVLESLTII) traverse the membrane as a helical segment. Over 23-41 (VQSSLIVAVLGREWLQVRR) the chain is Cytoplasmic. The helical transmembrane segment at 42-62 (LMPVDMILISLGISRFCLQWA) threads the bilayer. Residues 63 to 84 (SMLNNFCSYFNLNYVLCNLTIT) are Extracellular-facing. Residue Asn-80 is glycosylated (N-linked (GlcNAc...) asparagine). A helical transmembrane segment spans residues 85–105 (WEFFNILTFWLNSLLTVFYCI). At 106–125 (KVSSFTHHIFLWLRWRILRL) the chain is on the cytoplasmic side. A helical membrane pass occupies residues 126 to 146 (FPWILLGSLMITCVTIIPSAI). The Extracellular segment spans residues 147 to 182 (GNYIQIQLLTMEHLPRNSTVTDKLEKFHQYQFQAHT). Asn-163 carries N-linked (GlcNAc...) asparagine glycosylation. The helical transmembrane segment at 183 to 203 (VALVIPFILFLASTILLMASL) threads the bilayer. Over 204 to 228 (TKQIQHHSTGHCNPSMKAHFTALRS) the chain is Cytoplasmic. The helical transmembrane segment at 229–249 (LAVLFIVFTSYFLTILITIIG) threads the bilayer. At 250–257 (TLFDKRCW) the chain is on the extracellular side. Residues 258 to 278 (LWVWEAFVYAFILMHSTSLML) form a helical membrane-spanning segment. Residues 279–291 (SSPTLKRILKGKC) lie on the Cytoplasmic side of the membrane.

The protein belongs to the G-protein coupled receptor T2R family. In terms of assembly, interacts with RTP3 and RTP4.

The protein localises to the cell membrane. Functionally, receptor that may play a role in the perception of bitterness and is gustducin-linked. May play a role in sensing the chemical composition of the gastrointestinal content. The activity of this receptor may stimulate alpha gustducin, mediate PLC-beta-2 activation and lead to the gating of TRPM5. The sequence is that of Taste receptor type 2 member 16 (TAS2R16) from Pan troglodytes (Chimpanzee).